Consider the following 527-residue polypeptide: Glutamate--cysteine ligase (527 aa).

Belongs to the glutamate--cysteine ligase type 1 family. Type 1 subfamily.

It carries out the reaction L-cysteine + L-glutamate + ATP = gamma-L-glutamyl-L-cysteine + ADP + phosphate + H(+). Its pathway is sulfur metabolism; glutathione biosynthesis; glutathione from L-cysteine and L-glutamate: step 1/2. The sequence is that of Glutamate--cysteine ligase from Pseudomonas paraeruginosa (strain DSM 24068 / PA7) (Pseudomonas aeruginosa (strain PA7)).